Here is a 215-residue protein sequence, read N- to C-terminus: Cytochrome b6 (215 aa).

Residues 32 to 52 (IFYCIGGIVFTSFLIQVASGF) traverse the membrane as a helical segment. Cys-35 contributes to the heme c binding site. 2 residues coordinate heme b: His-86 and His-100. The next 3 membrane-spanning stretches (helical) occupy residues 90–110 (ASMM…TGGF), 116–136 (LTWV…VTGY), and 186–206 (LHTF…FLMI). Positions 187 and 202 each coordinate heme b.

The protein belongs to the cytochrome b family. PetB subfamily. As to quaternary structure, the 4 large subunits of the cytochrome b6-f complex are cytochrome b6, subunit IV (17 kDa polypeptide, PetD), cytochrome f and the Rieske protein, while the 4 small subunits are PetG, PetL, PetM and PetN. The complex functions as a dimer. It depends on heme b as a cofactor. Heme c is required as a cofactor.

It localises to the plastid. It is found in the chloroplast thylakoid membrane. Its function is as follows. Component of the cytochrome b6-f complex, which mediates electron transfer between photosystem II (PSII) and photosystem I (PSI), cyclic electron flow around PSI, and state transitions. This is Cytochrome b6 from Gracilaria tenuistipitata var. liui (Red alga).